Reading from the N-terminus, the 151-residue chain is Large ribosomal subunit protein uL22 (151 aa).

Belongs to the universal ribosomal protein uL22 family. Part of the 50S ribosomal subunit.

Its function is as follows. This protein binds specifically to 23S rRNA. It makes multiple contacts with different domains of the 23S rRNA in the assembled 50S subunit and ribosome. Functionally, the globular domain of the protein is located near the polypeptide exit tunnel on the outside of the subunit, while an extended beta-hairpin is found that lines the wall of the exit tunnel in the center of the 70S ribosome. The protein is Large ribosomal subunit protein uL22 of Thermoplasma acidophilum (strain ATCC 25905 / DSM 1728 / JCM 9062 / NBRC 15155 / AMRC-C165).